A 200-amino-acid polypeptide reads, in one-letter code: Recombination protein RecR (200 aa).

The C4-type zinc finger occupies 59-74 (CGTCGSLDVTDPCAVC). One can recognise a Toprim domain in the interval 82 to 177 (RLLCVVEEVG…PVTMLARGVP (96 aa)).

Belongs to the RecR family.

Its function is as follows. May play a role in DNA repair. It seems to be involved in an RecBC-independent recombinational process of DNA repair. It may act with RecF and RecO. The protein is Recombination protein RecR of Caulobacter vibrioides (strain ATCC 19089 / CIP 103742 / CB 15) (Caulobacter crescentus).